We begin with the raw amino-acid sequence, 160 residues long: Probable prefoldin subunit 5 (160 aa).

This sequence belongs to the prefoldin subunit alpha family. As to quaternary structure, heterohexamer of two PFD-alpha type and four PFD-beta type subunits.

Binds specifically to cytosolic chaperonin (c-CPN) and transfers target proteins to it. Binds to nascent polypeptide chain and promotes folding in an environment in which there are many competing pathways for nonnative proteins. This Dictyostelium discoideum (Social amoeba) protein is Probable prefoldin subunit 5 (pfdn5).